Reading from the N-terminus, the 73-residue chain is Large ribosomal subunit protein bL31c (73 aa).

This sequence belongs to the bacterial ribosomal protein bL31 family. Type A subfamily. As to quaternary structure, part of the 50S ribosomal subunit.

It is found in the plastid. Its subcellular location is the chloroplast. Binds the 23S rRNA. This is Large ribosomal subunit protein bL31c from Palmaria palmata (Dulse).